The primary structure comprises 217 residues: UPF0173 metal-dependent hydrolase MJ1163 (217 aa).

Belongs to the UPF0173 family.

In Methanocaldococcus jannaschii (strain ATCC 43067 / DSM 2661 / JAL-1 / JCM 10045 / NBRC 100440) (Methanococcus jannaschii), this protein is UPF0173 metal-dependent hydrolase MJ1163.